The primary structure comprises 197 residues: Probable GTP-binding protein EngB (197 aa).

Residues 22-195 enclose the EngB-type G domain; that stretch reads NLPEIAFVGR…VDYLFDDLVE (174 aa). Residues 30–37, 57–61, 75–78, 142–145, and 174–176 contribute to the GTP site; these read GRSNVGKS, GKTRL, DLPG, TKSD, and FSS. 2 residues coordinate Mg(2+): Ser-37 and Thr-59.

It belongs to the TRAFAC class TrmE-Era-EngA-EngB-Septin-like GTPase superfamily. EngB GTPase family. The cofactor is Mg(2+).

Functionally, necessary for normal cell division and for the maintenance of normal septation. The sequence is that of Probable GTP-binding protein EngB from Clostridium perfringens (strain SM101 / Type A).